The chain runs to 108 residues: T cell receptor alpha variable 1-1 (108 aa).

An N-terminal signal peptide occupies residues 1–18 (MWGAFLLYVSMKMGGTAG). The Ig-like domain occupies 19 to 108 (QSLEQPSEVT…DSASYFCAVR (90 aa)). A glycan (N-linked (GlcNAc...) asparagine) is linked at Asn38. Residues Cys39 and Cys105 are joined by a disulfide bond.

As to quaternary structure, alpha-beta TR is a heterodimer composed of an alpha and beta chain; disulfide-linked. The alpha-beta TR is associated with the transmembrane signaling CD3 coreceptor proteins to form the TR-CD3 (TcR or TCR). The assembly of alpha-beta TR heterodimers with CD3 occurs in the endoplasmic reticulum where a single alpha-beta TR heterodimer associates with one CD3D-CD3E heterodimer, one CD3G-CD3E heterodimer and one CD247 homodimer forming a stable octameric structure. CD3D-CD3E and CD3G-CD3E heterodimers preferentially associate with TR alpha and TR beta chains, respectively. The association of the CD247 homodimer is the last step of TcR assembly in the endoplasmic reticulum and is required for transport to the cell surface.

The protein localises to the cell membrane. V region of the variable domain of T cell receptor (TR) alpha chain that participates in the antigen recognition. Alpha-beta T cell receptors are antigen specific receptors which are essential to the immune response and are present on the cell surface of T lymphocytes. Recognize peptide-major histocompatibility (MH) (pMH) complexes that are displayed by antigen presenting cells (APC), a prerequisite for efficient T cell adaptive immunity against pathogens. Binding of alpha-beta TR to pMH complex initiates TR-CD3 clustering on the cell surface and intracellular activation of LCK that phosphorylates the ITAM motifs of CD3G, CD3D, CD3E and CD247 enabling the recruitment of ZAP70. In turn ZAP70 phosphorylates LAT, which recruits numerous signaling molecules to form the LAT signalosome. The LAT signalosome propagates signal branching to three major signaling pathways, the calcium, the mitogen-activated protein kinase (MAPK) kinase and the nuclear factor NF-kappa-B (NF-kB) pathways, leading to the mobilization of transcription factors that are critical for gene expression and essential for T cell growth and differentiation. The T cell repertoire is generated in the thymus, by V-(D)-J rearrangement. This repertoire is then shaped by intrathymic selection events to generate a peripheral T cell pool of self-MH restricted, non-autoaggressive T cells. Post-thymic interaction of alpha-beta TR with the pMH complexes shapes TR structural and functional avidity. The sequence is that of T cell receptor alpha variable 1-1 from Homo sapiens (Human).